Consider the following 718-residue polypeptide: Class E vacuolar protein-sorting machinery protein HSE1 (718 aa).

A VHS domain is found at Ala-17–Gln-146. Disordered regions lie at residues Asn-142–Glu-164 and Glu-178–Gly-230. In terms of domain architecture, UIM spans Lys-163–Lys-182. Low complexity-rich tracts occupy residues Pro-187–Pro-202 and Gly-210–Ala-221. One can recognise an SH3 domain in the interval Ala-234–Asp-293. Residues Ser-384–Tyr-718 are disordered. Over residues Thr-408–Pro-438 the composition is skewed to pro residues. Residues Pro-509–Gln-520 are compositionally biased toward low complexity. Polar residues predominate over residues Gly-521–Tyr-534. The span at Gln-581–Gln-604 shows a compositional bias: low complexity. Residues Pro-624 to Pro-637 are compositionally biased toward pro residues. Composition is skewed to low complexity over residues Gly-665–Gly-680 and Val-689–Ala-706.

The protein belongs to the STAM family. As to quaternary structure, component of the ESCRT-0 complex composed of HSE1 and VPS27.

Its subcellular location is the endosome membrane. Its function is as follows. Component of the ESCRT-0 complex which is the sorting receptor for ubiquitinated cargo proteins at the multivesicular body (MVB). The polypeptide is Class E vacuolar protein-sorting machinery protein HSE1 (HSE1) (Pyricularia oryzae (strain 70-15 / ATCC MYA-4617 / FGSC 8958) (Rice blast fungus)).